Consider the following 462-residue polypeptide: Semenogelin-1 (462 aa).

The N-terminal stretch at 1–23 is a signal peptide; the sequence is MKPNIIFVLSLLLILEKQAAVMG. Glutamine 24 carries the post-translational modification Pyrrolidone carboxylic acid. A disordered region spans residues 24–61; it reads QKGGSKGRLPSEFSQFPHGQKGQHYSGQKGKQQTESKG. Positions 46–61 are enriched in polar residues; sequence QHYSGQKGKQQTESKG. 3 tandem repeats follow at residues 70-129, 141-200, and 201-260. Positions 70–439 are repeat-rich region; sequence HVDANDHDQS…SHGGLDIVII (370 aa). 2 disordered regions span residues 131 to 157 and 173 to 194; these read KGGKAHRGTQNPSQDQGNSPSGKGISS and KEQTSVSGAQKGRKQGGSQSSY. The span at 138-157 shows a compositional bias: polar residues; the sequence is GTQNPSQDQGNSPSGKGISS. The interval 164-283 is interaction with EPPIN; it reads ERLWVHGLSK…NQDQQHGRKA (120 aa). Residues 261–380 are 2 X 60 AA tandem repeats, type 1; the sequence is LVYNKNQHQT…QRSIYSQTEK (120 aa). The segment at 270 to 432 is disordered; it reads TKNLNQDQQH…KGRHQHGSHG (163 aa). 3 stretches are compositionally biased toward polar residues: residues 308–317, 324–335, and 343–352; these read DVSQSSIYSQ, GKSQKQITIPSQ, and ANKISYQSSS. A 3-2 repeat occupies 381 to 439; the sequence is LVAGKSQIQAPNPKQEPWHGENAKGESGQSTNREQDLLSHEQKGRHQHGSHGGLDIVII. Basic and acidic residues predominate over residues 413 to 424; the sequence is REQDLLSHEQKG.

This sequence belongs to the semenogelin family. Occurs in disulfide-linked complexes which may also contain two less abundant 71- and 76-kDa semenogelin-related polypeptides. Interacts with EPPIN (via C-terminus); Cys-239 is a critical amino acid for both binding to EPPIN. Post-translationally, transglutaminase substrate. In terms of processing, rapidly cleaved after ejaculation by KLK3/PSA, resulting in liquefaction of the semen coagulum and the progressive release of motile spermatozoa. Seminal vesicle.

It is found in the secreted. Predominant protein in semen. It participates in the formation of a gel matrix entrapping the accessory gland secretions and ejaculated spermatozoa. Fragments of semenogelin and/or fragments of the related proteins may contribute to the activation of progressive sperm movements as the gel-forming proteins are fragmented by KLK3/PSA. Functionally, alpha-inhibin-92 and alpha-inhibin-31, derived from the proteolytic degradation of semenogelin, inhibit the secretion of pituitary follicle-stimulating hormone. This Homo sapiens (Human) protein is Semenogelin-1 (SEMG1).